A 367-amino-acid chain; its full sequence is MELGCPELLEPPEDIFSTGSFLELGFNGPPSKVPGLQKSESDDFLNLFIDPNMIRCSETSPGSDSGVSEDPGSPAPQAPSSPALYEVVYEAGALQGTQREAGPTFGLISIQIDQWSPAFMVPGACTVSDLPSEAHRHILPRVSTIAPPPPAALLSCQRLFLTDEEKHLLGQEGVTLPSHLPLTKAEERILKKIRRKIRNKQSAQDSRRRKKEYIDGLESRVAACSEQNQKLQRKVQELERQNISLVAQVHQLQKFTAQTSSRAAQTSTCVLILLFSLALIILPSFSPFQSQPEARSEGYQLHGVISRNILTHEDMTESPESPVLKANLEELPQVPATNGSTKMAHLKMRVKARPTGPIRGMVHADEM.

Positions 1–52 (MELGCPELLEPPEDIFSTGSFLELGFNGPPSKVPGLQKSESDDFLNLFIDPN) are required for transcriptional activation. The Cytoplasmic segment spans residues 1 to 267 (MELGCPELLE…QTSSRAAQTS (267 aa)). The segment at 58-81 (ETSPGSDSGVSEDPGSPAPQAPSS) is disordered. The bZIP domain maps to 189–252 (ILKKIRRKIR…ISLVAQVHQL (64 aa)). The segment at 191-230 (KKIRRKIRNKQSAQDSRRRKKEYIDGLESRVAACSEQNQK) is basic motif. The leucine-zipper stretch occupies residues 231–252 (LQRKVQELERQNISLVAQVHQL). A helical; Signal-anchor for type II membrane protein membrane pass occupies residues 268 to 288 (TCVLILLFSLALIILPSFSPF). Residues 289 to 367 (QSQPEARSEG…IRGMVHADEM (79 aa)) lie on the Lumenal side of the membrane. N338 carries an N-linked (GlcNAc...) asparagine glycan.

Belongs to the bZIP family. ATF subfamily. Binds DNA as a dimer. Forms a heterodimer with CREM isoform Delta. Controlled by regulated intramembrane proteolysis (RIP). Following ER stress a fragment containing the cytoplasmic transcription factor domain is released by proteolysis. The cleavage seems to be performed sequentially by site-1 and site-2 proteases (PS1 and PS2). PS1 cleavage may be suppressed by a determinant in the C-terminal region.

It localises to the endoplasmic reticulum membrane. It is found in the nucleus. Transcriptional activator that may play a role in the unfolded protein response. Binds to the UPR element (UPRE) but not to CRE element. Preferentially binds DNA with to the consensus sequence 5'-T[GT]ACGT[GA][GT]-3' and has transcriptional activation activity from UPRE. Binds to NF-kappa-B site and has transcriptional activation activity from NF-kappa-B-containing regulatory elements. Increases the binding of CREM isoform Delta with CRE. The CREM isoform Delta-CREB3L4 heterodimer functions through CRE but not through UPRE and may recruit HIRA to CRE to regulate histone exchange. The polypeptide is Cyclic AMP-responsive element-binding protein 3-like protein 4 (Creb3l4) (Rattus norvegicus (Rat)).